The primary structure comprises 277 residues: Digeranylgeranylglyceryl phosphate synthase (277 aa).

7 helical membrane-spanning segments follow: residues 16-36 (ILAG…IPDI), 84-104 (ALYY…FLNI), 107-127 (FVFA…LKPL), 146-166 (GAIG…AFLV), 200-220 (AIIA…PVKV), 221-241 (GIGL…KASI), and 257-277 (LKIA…TKGV).

Belongs to the UbiA prenyltransferase family. DGGGP synthase subfamily. Mg(2+) serves as cofactor.

Its subcellular location is the cell membrane. The catalysed reaction is sn-3-O-(geranylgeranyl)glycerol 1-phosphate + (2E,6E,10E)-geranylgeranyl diphosphate = 2,3-bis-O-(geranylgeranyl)-sn-glycerol 1-phosphate + diphosphate. It functions in the pathway membrane lipid metabolism; glycerophospholipid metabolism. Functionally, prenyltransferase that catalyzes the transfer of the geranylgeranyl moiety of geranylgeranyl diphosphate (GGPP) to the C2 hydroxyl of (S)-3-O-geranylgeranylglyceryl phosphate (GGGP). This reaction is the second ether-bond-formation step in the biosynthesis of archaeal membrane lipids. This chain is Digeranylgeranylglyceryl phosphate synthase, found in Pyrococcus furiosus (strain ATCC 43587 / DSM 3638 / JCM 8422 / Vc1).